The chain runs to 551 residues: Interferon-induced, double-stranded RNA-activated protein kinase (551 aa).

Position 2 is an N-acetylalanine (Ala-2). The segment at 2–180 is (Microbial infection) Interaction with HCV NS5A; sequence AGDLSAGFFM…SVKSDYLSSG (179 aa). The 69-residue stretch at 9 to 77 folds into the DRBM 1 domain; the sequence is FFMEELNTYR…AKLAVEILNK (69 aa). Lys-69 participates in a covalent cross-link: Glycyl lysine isopeptide (Lys-Gly) (interchain with G-Cter in ISG15). Phosphoserine is present on Ser-83. Thr-88, Thr-89, and Thr-90 each carry phosphothreonine; by autocatalysis. The DRBM 2 domain maps to 100–167; that stretch reads NYIGLINRIA…AKLAYLQILS (68 aa). A Phosphotyrosine; by autocatalysis modification is found at Tyr-101. Residue Lys-159 forms a Glycyl lysine isopeptide (Lys-Gly) (interchain with G-Cter in ISG15) linkage. At Tyr-162 the chain carries Phosphotyrosine; by autocatalysis. Positions 202–215 are enriched in polar residues; sequence SSSEGDFSADTSEI. Positions 202–222 are disordered; sequence SSSEGDFSADTSEINSNSDSL. Position 242 is a phosphoserine; by autocatalysis (Ser-242). A phosphothreonine; by autocatalysis mark is found at Thr-255 and Thr-258. The segment at 266 to 362 is dimerization; it reads DFKEIELIGS…NSSRSKTKCL (97 aa). The interval 266-551 is interaction with TRAF5; it reads DFKEIELIGS…SPEKNERHTC (286 aa). Residues 267 to 538 form the Protein kinase domain; the sequence is FKEIELIGSG…TSEILRTLTV (272 aa). 273–281 is a binding site for ATP; that stretch reads IGSGGFGQV. Residue Tyr-293 is modified to Phosphotyrosine; by autocatalysis. ATP is bound at residue Lys-296. 2 tandem repeats follow at residues 331-343 and 345-357. Residues 331–357 are 2 X 13 AA approximate repeats; it reads DYDPETSDDSLESSDYDPENSKNSSRS. The segment at 379–496 is interaction with EIF2S1/EIF-2ALPHA; sequence EKRRGEKLDK…TAFETSKFFT (118 aa). Residue Asp-414 is the Proton acceptor of the active site. Asp-432 contributes to the Mg(2+) binding site. Phosphothreonine; by autocatalysis is present on residues Thr-446 and Thr-451. A phosphoserine mark is found at Ser-456 and Ser-542.

Belongs to the protein kinase superfamily. Ser/Thr protein kinase family. GCN2 subfamily. Homodimer. Interacts with STRBP. Interacts with DNAJC3. Forms a complex with FANCA, FANCC, FANCG and HSP70. Interacts with ADAR/ADAR1. Interacts with IRS1. The inactive form interacts with NCK1 and GSN. Interacts (via the kinase catalytic domain) with STAT3 (via SH2 domain), TRAF2 (C-terminus), TRAF5 (C-terminus) and TRAF6 (C-terminus). Interacts with MAP2K6, IKBKB/IKKB, NPM1, TARBP2, NLRP1, NLRP3, NLRC4 and AIM2. Interacts (via DRBM 1 domain) with DUS2L (via DRBM domain). Interacts with DHX9 (via N-terminus) and this interaction is dependent upon activation of the kinase. Interacts with EIF2S1/EIF-2ALPHA; this interaction induces a conformational change in EIF2S1 and its phosphorylation by EIF2AK2. As to quaternary structure, (Microbial infection) Interacts with human cytomegalovirus (HCMV) TRS1; this interaction retains EIF2AK2 to the nucleus and prevents its activation. In terms of assembly, (Microbial infection) Interacts with vaccinia virus protein K3 (K3L); this interaction inhibits EIF2AK2. (Microbial infection) Interacts with human herpes simplex virus 1 (HHV-1) protein US11 in an RNA-dependent manner. As to quaternary structure, (Microbial infection) The inactive form interacts with Toscana virus (TOS) NSS. In terms of assembly, (Microbial infection) Interacts with herpes virus 8 protein v-IRF2; this interaction inhibits EIF2AK2 activation. (Microbial infection) Interacts with vaccinia protein E3. As to quaternary structure, (Microbial infection) Interacts (via N-terminus) with Hepatitis C virus (HCV) mature core protein (via N-terminus); this interaction induces the autophosphorylation of EIF2AK2. In terms of assembly, (Microbial infection) Interacts with Hepatitis C virus (HCV) non-structural protein 5A (NS5A); this interaction leads to disruption of EIF2AK2 dimerization by NS5A. (Microbial infection) Interacts with Hepatitis C virus (HCV) envelope glycoprotein E2; this interaction inhibits EIF2AK2 and blocks its inhibitory effect on protein synthesis and cell growth. As to quaternary structure, (Microbial infection) Interacts with human respiratory syncytial virus (HRSV) nucleoprotein; this interaction inhibits EIF2AK2 phosphorylation of EIF2S1 and blocks EIF2AK2-mediated translation shutoff. In terms of assembly, (Microbial infection) Interacts with human herpesvirus 8 protein MTA/ORF57; this interaction inhibits stress granule formation. Requires Mg(2+) as cofactor. In terms of processing, autophosphorylated on several Ser, Thr and Tyr residues. Autophosphorylation of Thr-451 is dependent on Thr-446 and is stimulated by dsRNA binding and dimerization. Autophosphorylation apparently leads to the activation of the kinase. Tyrosine autophosphorylation is essential for efficient dsRNA-binding, dimerization, and kinase activation. As to expression, highly expressed in thymus, spleen and bone marrow compared to non-hematopoietic tissues such as small intestine, liver, or kidney tissues. Colocalizes with GSK3B and TAU in the Alzheimer disease (AD) brain. Elevated levels seen in breast and colon carcinomas, and which correlates with tumor progression and invasiveness or risk of progression.

It is found in the cytoplasm. Its subcellular location is the nucleus. The protein resides in the perinuclear region. The enzyme catalyses L-seryl-[protein] + ATP = O-phospho-L-seryl-[protein] + ADP + H(+). It catalyses the reaction L-threonyl-[protein] + ATP = O-phospho-L-threonyl-[protein] + ADP + H(+). It carries out the reaction L-tyrosyl-[protein] + ATP = O-phospho-L-tyrosyl-[protein] + ADP + H(+). Initially produced in an inactive form and is activated by binding to viral dsRNA, which causes dimerization and autophosphorylation in the activation loop and stimulation of function. ISGylation can activate it in the absence of viral infection. Can also be activated by heparin, pro-inflammatory stimuli, growth factors, cytokines, oxidative stress and the cellular protein PRKRA. Activity is markedly stimulated by manganese ions. Activation is blocked by the viral components HIV-1 Tat protein and large amounts of HIV-1 trans-activation response (TAR) RNA element as well as by the cellular proteins TARBP2, DUS2L, NPM1, NCK1 and ADAR. Down-regulated by Toscana virus (TOS) and Rift valley fever virus (RVFV) NSS which promote its proteasomal degradation. Inhibited by vaccinia virus protein E3, probably via dsRNA sequestering. Its function is as follows. IFN-induced dsRNA-dependent serine/threonine-protein kinase that phosphorylates the alpha subunit of eukaryotic translation initiation factor 2 (EIF2S1/eIF-2-alpha) and plays a key role in the innate immune response to viral infection. Inhibits viral replication via the integrated stress response (ISR): EIF2S1/eIF-2-alpha phosphorylation in response to viral infection converts EIF2S1/eIF-2-alpha in a global protein synthesis inhibitor, resulting to a shutdown of cellular and viral protein synthesis, while concomitantly initiating the preferential translation of ISR-specific mRNAs, such as the transcriptional activator ATF4. Exerts its antiviral activity on a wide range of DNA and RNA viruses including hepatitis C virus (HCV), hepatitis B virus (HBV), measles virus (MV) and herpes simplex virus 1 (HHV-1). Also involved in the regulation of signal transduction, apoptosis, cell proliferation and differentiation: phosphorylates other substrates including p53/TP53, PPP2R5A, DHX9, ILF3, IRS1 and the HHV-1 viral protein US11. In addition to serine/threonine-protein kinase activity, also has tyrosine-protein kinase activity and phosphorylates CDK1 at 'Tyr-4' upon DNA damage, facilitating its ubiquitination and proteasomal degradation. Either as an adapter protein and/or via its kinase activity, can regulate various signaling pathways (p38 MAP kinase, NF-kappa-B and insulin signaling pathways) and transcription factors (JUN, STAT1, STAT3, IRF1, ATF3) involved in the expression of genes encoding pro-inflammatory cytokines and IFNs. Activates the NF-kappa-B pathway via interaction with IKBKB and TRAF family of proteins and activates the p38 MAP kinase pathway via interaction with MAP2K6. Can act as both a positive and negative regulator of the insulin signaling pathway (ISP). Negatively regulates ISP by inducing the inhibitory phosphorylation of insulin receptor substrate 1 (IRS1) at 'Ser-312' and positively regulates ISP via phosphorylation of PPP2R5A which activates FOXO1, which in turn up-regulates the expression of insulin receptor substrate 2 (IRS2). Can regulate NLRP3 inflammasome assembly and the activation of NLRP3, NLRP1, AIM2 and NLRC4 inflammasomes. Plays a role in the regulation of the cytoskeleton by binding to gelsolin (GSN), sequestering the protein in an inactive conformation away from actin. In Homo sapiens (Human), this protein is Interferon-induced, double-stranded RNA-activated protein kinase (EIF2AK2).